A 187-amino-acid chain; its full sequence is Oligoribonuclease (187 aa).

The 164-residue stretch at 7–170 (LIWIDLEMTG…DDIKDSINEL (164 aa)) folds into the Exonuclease domain. Residue Tyr128 is part of the active site.

The protein belongs to the oligoribonuclease family.

Its subcellular location is the cytoplasm. In terms of biological role, 3'-to-5' exoribonuclease specific for small oligoribonucleotides. This Legionella pneumophila (strain Paris) protein is Oligoribonuclease.